The following is a 156-amino-acid chain: MPRRRVAAKREILDDPKYGSQILAKFMNHVMESGKKAVAERIVYGALEKVKERKNSDPLEIFEKALDAIAPLVEVKSRRVGGATYQVPVEVRPSRRNALAMRWLVDFARKRGEKSMALRLAGELLDAAEGKGAAVKKREDVHRMAEANKAFSHYRF.

Belongs to the universal ribosomal protein uS7 family. Part of the 30S ribosomal subunit. Contacts proteins S9 and S11.

Functionally, one of the primary rRNA binding proteins, it binds directly to 16S rRNA where it nucleates assembly of the head domain of the 30S subunit. Is located at the subunit interface close to the decoding center, probably blocks exit of the E-site tRNA. The sequence is that of Small ribosomal subunit protein uS7 from Pseudomonas fluorescens (strain ATCC BAA-477 / NRRL B-23932 / Pf-5).